We begin with the raw amino-acid sequence, 154 residues long: Phosphopantetheine adenylyltransferase (154 aa).

The protein belongs to the eukaryotic CoaD family.

It localises to the cytoplasm. The enzyme catalyses (R)-4'-phosphopantetheine + ATP + H(+) = 3'-dephospho-CoA + diphosphate. Its pathway is cofactor biosynthesis; coenzyme A biosynthesis. Functionally, reversibly transfers an adenylyl group from ATP to 4'-phosphopantetheine, yielding dephospho-CoA (dPCoA) and pyrophosphate. In Methanosarcina mazei (strain ATCC BAA-159 / DSM 3647 / Goe1 / Go1 / JCM 11833 / OCM 88) (Methanosarcina frisia), this protein is Phosphopantetheine adenylyltransferase.